A 67-amino-acid chain; its full sequence is DNA-directed RNA polymerase subunit omega (67 aa).

The protein belongs to the RNA polymerase subunit omega family. As to quaternary structure, the RNAP catalytic core consists of 2 alpha, 1 beta, 1 beta' and 1 omega subunit. When a sigma factor is associated with the core the holoenzyme is formed, which can initiate transcription.

The enzyme catalyses RNA(n) + a ribonucleoside 5'-triphosphate = RNA(n+1) + diphosphate. Promotes RNA polymerase assembly. Latches the N- and C-terminal regions of the beta' subunit thereby facilitating its interaction with the beta and alpha subunits. In Burkholderia ambifaria (strain ATCC BAA-244 / DSM 16087 / CCUG 44356 / LMG 19182 / AMMD) (Burkholderia cepacia (strain AMMD)), this protein is DNA-directed RNA polymerase subunit omega.